The sequence spans 236 residues: 7-cyano-7-deazaguanine synthase (236 aa).

Residue 7–17 (CSGGLDSVTLA) coordinates ATP. Cysteine 185, cysteine 193, cysteine 196, and cysteine 199 together coordinate Zn(2+).

The protein belongs to the QueC family. The cofactor is Zn(2+).

It carries out the reaction 7-carboxy-7-deazaguanine + NH4(+) + ATP = 7-cyano-7-deazaguanine + ADP + phosphate + H2O + H(+). It functions in the pathway purine metabolism; 7-cyano-7-deazaguanine biosynthesis. Catalyzes the ATP-dependent conversion of 7-carboxy-7-deazaguanine (CDG) to 7-cyano-7-deazaguanine (preQ(0)). In Rhizobium johnstonii (strain DSM 114642 / LMG 32736 / 3841) (Rhizobium leguminosarum bv. viciae), this protein is 7-cyano-7-deazaguanine synthase.